The following is a 718-amino-acid chain: Ribosome-releasing factor 2, mitochondrial (718 aa).

The transit peptide at 1 to 29 directs the protein to the mitochondrion; the sequence is MLKCAWQNGPRQSNRWLWQLSNQIWKRSY. In terms of domain architecture, tr-type G spans 31–310; the sequence is SKIRNIGILA…AVNSYLPAPE (280 aa). Residues 40–47, 104–108, and 158–161 each bind GTP; these read AHIDAGKT, DTPGH, and NKMD.

This sequence belongs to the TRAFAC class translation factor GTPase superfamily. Classic translation factor GTPase family. EF-G/EF-2 subfamily.

It is found in the mitochondrion. Its function is as follows. Mitochondrial GTPase that mediates the disassembly of ribosomes from messenger RNA at the termination of mitochondrial protein biosynthesis. Not involved in the GTP-dependent ribosomal translocation step during translation elongation. The sequence is that of Ribosome-releasing factor 2, mitochondrial from Drosophila erecta (Fruit fly).